A 117-amino-acid polypeptide reads, in one-letter code: NADH-ubiquinone oxidoreductase chain 3 (117 aa).

3 consecutive transmembrane segments (helical) span residues 5–25 (ALSS…AWVL), 57–77 (FFLL…LMPL), and 86–106 (VFTT…GLIH).

Belongs to the complex I subunit 3 family.

The protein resides in the mitochondrion membrane. It carries out the reaction a ubiquinone + NADH + 5 H(+)(in) = a ubiquinol + NAD(+) + 4 H(+)(out). Core subunit of the mitochondrial membrane respiratory chain NADH dehydrogenase (Complex I) that is believed to belong to the minimal assembly required for catalysis. Complex I functions in the transfer of electrons from NADH to the respiratory chain. The immediate electron acceptor for the enzyme is believed to be ubiquinone. The protein is NADH-ubiquinone oxidoreductase chain 3 (ND3) of Lumbricus terrestris (Common earthworm).